Reading from the N-terminus, the 292-residue chain is NAD kinase (292 aa).

Asp73 (proton acceptor) is an active-site residue. Residues 73 to 74, 147 to 148, His158, Arg175, Asp177, 188 to 193, and Gln247 each bind NAD(+); these read DG, NE, and TAYSLS.

It belongs to the NAD kinase family. A divalent metal cation serves as cofactor.

Its subcellular location is the cytoplasm. It catalyses the reaction NAD(+) + ATP = ADP + NADP(+) + H(+). Functionally, involved in the regulation of the intracellular balance of NAD and NADP, and is a key enzyme in the biosynthesis of NADP. Catalyzes specifically the phosphorylation on 2'-hydroxyl of the adenosine moiety of NAD to yield NADP. The chain is NAD kinase from Klebsiella pneumoniae subsp. pneumoniae (strain ATCC 700721 / MGH 78578).